Consider the following 300-residue polypeptide: Porphobilinogen deaminase (300 aa).

At cysteine 239 the chain carries S-(dipyrrolylmethanemethyl)cysteine.

This sequence belongs to the HMBS family. Monomer. Dipyrromethane serves as cofactor.

It carries out the reaction 4 porphobilinogen + H2O = hydroxymethylbilane + 4 NH4(+). It participates in porphyrin-containing compound metabolism; protoporphyrin-IX biosynthesis; coproporphyrinogen-III from 5-aminolevulinate: step 2/4. In terms of biological role, tetrapolymerization of the monopyrrole PBG into the hydroxymethylbilane pre-uroporphyrinogen in several discrete steps. In Francisella philomiragia subsp. philomiragia (strain ATCC 25017 / CCUG 19701 / FSC 153 / O#319-036), this protein is Porphobilinogen deaminase.